Consider the following 348-residue polypeptide: Protein RecA (348 aa).

65–72 contributes to the ATP binding site; sequence GPESSGKT.

It belongs to the RecA family.

It is found in the cytoplasm. Can catalyze the hydrolysis of ATP in the presence of single-stranded DNA, the ATP-dependent uptake of single-stranded DNA by duplex DNA, and the ATP-dependent hybridization of homologous single-stranded DNAs. It interacts with LexA causing its activation and leading to its autocatalytic cleavage. This is Protein RecA from Enterococcus gallinarum.